A 288-amino-acid polypeptide reads, in one-letter code: MNNVKVPKIPGGGAISTLLKVGIIGGLGLYGATHSLYNVEGGHRAIMFNRLVGIKDKVYPEGTHLMIPWFERPVIYDVRARPYLVESTSGSRDLQMVKIGLRVLTRPMADQLPEIYRSLGENYSERVLPSIINETLKAVVAQYNASQLITQREAVSREIRKILTERAANFNVALDDVSITNLTFGKEFTAAIEAKQVAAQEAERAKFIVEKAEQDKRSAVIRAQGEAKSAQLIGQAIANNQAFITLRKIEAAREIAQTIANSANKVYLSSDDLLLNLQGMNLDVDAKN.

Topologically, residues 1 to 10 are mitochondrial matrix; the sequence is MNNVKVPKIP. Residues 11–30 traverse the membrane as a helical; Signal-anchor for type II membrane protein segment; the sequence is GGGAISTLLKVGIIGGLGLY. Residues 31 to 288 lie on the Mitochondrial intermembrane side of the membrane; sequence GATHSLYNVE…GMNLDVDAKN (258 aa). A coiled-coil region spans residues 186-219; it reads KEFTAAIEAKQVAAQEAERAKFIVEKAEQDKRSA.

It belongs to the prohibitin family. In terms of assembly, component of a prohibitin multimeric complex in mitochondrial membranes. In terms of tissue distribution, mostly expressed in proliferative tissues, including vasculature, shoot and root apical tissues.

The protein localises to the mitochondrion inner membrane. Functionally, prohibitin probably acts as a holdase/unfoldase for the stabilization of newly synthesized mitochondrial proteins. The polypeptide is Prohibitin-1, mitochondrial (PHB1) (Arabidopsis thaliana (Mouse-ear cress)).